The following is a 593-amino-acid chain: Mitoguardin 2 (593 aa).

2 consecutive transmembrane segments (helical) span residues 11 to 31 (MIQALAMTVAEIPVFLYTTFG) and 42 to 62 (PGLRKVLFATALGTVALALAA). Disordered stretches follow at residues 98-134 (PSVKKGCSSRRVQSPSSKSNDTLSGISSIEPSKHSGS), 150-171 (TAACSGSWEARGMEESVPTTDG), and 197-229 (VGQRGDGGSTPTPGDSLQNPDTASEALSEPESQ). Low complexity-rich tracts occupy residues 106–116 (SRRVQSPSSKS) and 124–134 (SSIEPSKHSGS). Serine 132 carries the phosphoserine modification. A compositionally biased stretch (polar residues) spans 205-218 (STPTPGDSLQNPDT). The residue at position 206 (threonine 206) is a Phosphothreonine. A phosphoserine mark is found at serine 220, serine 224, and serine 228. Phosphothreonine is present on threonine 273. A phosphoserine mark is found at serine 276 and serine 295. Residues 292–298 (SFFSATE) carry the FFAT motif.

It belongs to the mitoguardin family. In terms of assembly, homodimer and heterodimer; forms heterodimers with MIGA1. Interacts with PLD6/MitoPLD. Interacts (via phosphorylated FFAT motif) with MOSPD2. In terms of processing, phosphorylation at Ser-295 of the FFAT motif activates interaction with MOSPD2.

It localises to the mitochondrion outer membrane. Functionally, regulator of mitochondrial fusion. Acts by forming homo- and heterodimers at the mitochondrial outer membrane and facilitating the formation of PLD6/MitoPLD dimers. May act by regulating phospholipid metabolism via PLD6/MitoPLD. The sequence is that of Mitoguardin 2 from Mus musculus (Mouse).